The primary structure comprises 269 residues: Surfeit locus protein 4 (269 aa).

Transmembrane regions (helical) follow at residues 64 to 84, 92 to 112, 179 to 199, 203 to 223, and 242 to 262; these read FLATCFVLLNLIGQLGGCVLI, YACFGLFGIIALQTVAYSILW, FFSILQNLVGTALIILVAIGF, LAALTLVLWLLVINVYFNAFW, and TTSVIGGLLLVVALGPGGVSM. Residues 266 to 269 carry the Di-lysine motif motif; it reads KKEW.

It belongs to the SURF4 family.

The protein resides in the endoplasmic reticulum membrane. The protein localises to the endoplasmic reticulum-Golgi intermediate compartment membrane. Its subcellular location is the golgi apparatus membrane. Endoplasmic reticulum cargo receptor that mediates the export of lipoproteins by recruiting cargos into COPII vesicles to facilitate their secretion. Acts as a cargo receptor for lipoproteins bearing both APOB and APOA1, thereby regulating lipoprotein delivery and the maintenance of lipid homeostasis. This is Surfeit locus protein 4 from Takifugu rubripes (Japanese pufferfish).